A 121-amino-acid chain; its full sequence is Large ribosomal subunit protein uL22c (121 aa).

Belongs to the universal ribosomal protein uL22 family. As to quaternary structure, part of the 50S ribosomal subunit.

The protein resides in the plastid. It is found in the chloroplast. This protein binds specifically to 23S rRNA. In terms of biological role, the globular domain of the protein is located near the polypeptide exit tunnel on the outside of the subunit, while an extended beta-hairpin is found that lines the wall of the exit tunnel in the center of the 70S ribosome. The sequence is that of Large ribosomal subunit protein uL22c (rpl22) from Guillardia theta (Cryptophyte).